A 102-amino-acid chain; its full sequence is NADH-quinone oxidoreductase subunit K 1 (102 aa).

The next 3 helical transmembrane spans lie at 6-26 (LNAY…GVLV), 31-51 (LAIL…FVAF), and 65-85 (FLVI…TVLL).

This sequence belongs to the complex I subunit 4L family. In terms of assembly, NDH-1 is composed of 14 different subunits. Subunits NuoA, H, J, K, L, M, N constitute the membrane sector of the complex.

It localises to the cell membrane. The catalysed reaction is a quinone + NADH + 5 H(+)(in) = a quinol + NAD(+) + 4 H(+)(out). NDH-1 shuttles electrons from NADH, via FMN and iron-sulfur (Fe-S) centers, to quinones in the respiratory chain. The immediate electron acceptor for the enzyme in this species is believed to be a menaquinone. Couples the redox reaction to proton translocation (for every two electrons transferred, four hydrogen ions are translocated across the cytoplasmic membrane), and thus conserves the redox energy in a proton gradient. This is NADH-quinone oxidoreductase subunit K 1 from Symbiobacterium thermophilum (strain DSM 24528 / JCM 14929 / IAM 14863 / T).